Consider the following 336-residue polypeptide: Geranylgeranyl pyrophosphate synthase 6, mitochondrial (336 aa).

A mitochondrion-targeting transit peptide spans Met-1 to Leu-22. Lys-80, Arg-83, and His-112 together coordinate isopentenyl diphosphate. The Mg(2+) site is built by Asp-119 and Asp-125. Arg-130 serves as a coordination point for dimethylallyl diphosphate. Arg-131 contacts isopentenyl diphosphate. The dimethylallyl diphosphate site is built by Lys-221, Thr-222, Gln-259, Lys-276, and Lys-286.

This sequence belongs to the FPP/GGPP synthase family. Monomer. The cofactor is Mg(2+).

It localises to the mitochondrion. It carries out the reaction isopentenyl diphosphate + dimethylallyl diphosphate = (2E)-geranyl diphosphate + diphosphate. The catalysed reaction is isopentenyl diphosphate + (2E)-geranyl diphosphate = (2E,6E)-farnesyl diphosphate + diphosphate. The enzyme catalyses isopentenyl diphosphate + (2E,6E)-farnesyl diphosphate = (2E,6E,10E)-geranylgeranyl diphosphate + diphosphate. The protein operates within isoprenoid biosynthesis; farnesyl diphosphate biosynthesis; farnesyl diphosphate from geranyl diphosphate and isopentenyl diphosphate: step 1/1. It participates in isoprenoid biosynthesis; geranyl diphosphate biosynthesis; geranyl diphosphate from dimethylallyl diphosphate and isopentenyl diphosphate: step 1/1. It functions in the pathway isoprenoid biosynthesis; geranylgeranyl diphosphate biosynthesis; geranylgeranyl diphosphate from farnesyl diphosphate and isopentenyl diphosphate: step 1/1. Its function is as follows. Catalyzes the trans-addition of the three molecules of IPP onto DMAPP to form geranylgeranyl pyrophosphate. This is Geranylgeranyl pyrophosphate synthase 6, mitochondrial from Arabidopsis thaliana (Mouse-ear cress).